The primary structure comprises 901 residues: HTH-type transcriptional regulator MalT (901 aa).

39 to 46 contributes to the ATP binding site; the sequence is SPAGYGKT. The region spanning 829 to 894 is the HTH luxR-type domain; the sequence is ELIRTSPLTQ…DAVQHAQQLL (66 aa). The segment at residues 853-872 is a DNA-binding region (H-T-H motif); the sequence is NEQIAGELAVAATTIKTHIR.

The protein belongs to the MalT family. Monomer in solution. Oligomerizes to an active state in the presence of the positive effectors ATP and maltotriose.

With respect to regulation, activated by ATP and maltotriose, which are both required for DNA binding. Positively regulates the transcription of the maltose regulon whose gene products are responsible for uptake and catabolism of malto-oligosaccharides. Specifically binds to the promoter region of its target genes, recognizing a short DNA motif called the MalT box. This is HTH-type transcriptional regulator MalT from Salmonella heidelberg (strain SL476).